The sequence spans 466 residues: Acetyl-coenzyme A carboxylase carboxyl transferase subunit beta, chloroplastic (466 aa).

The region spanning 198–466 (LWIQCENCYE…FPLNQNSIGQ (269 aa)) is the CoA carboxyltransferase N-terminal domain. Zn(2+) contacts are provided by Cys-202, Cys-205, Cys-221, and Cys-224. The C4-type zinc-finger motif lies at 202-224 (CENCYELNYKKLLKSKMRICDEC).

This sequence belongs to the AccD/PCCB family. In terms of assembly, acetyl-CoA carboxylase is a heterohexamer composed of biotin carboxyl carrier protein, biotin carboxylase and 2 subunits each of ACCase subunit alpha and ACCase plastid-coded subunit beta (accD). Requires Zn(2+) as cofactor.

The protein localises to the plastid. Its subcellular location is the chloroplast stroma. It carries out the reaction N(6)-carboxybiotinyl-L-lysyl-[protein] + acetyl-CoA = N(6)-biotinyl-L-lysyl-[protein] + malonyl-CoA. It functions in the pathway lipid metabolism; malonyl-CoA biosynthesis; malonyl-CoA from acetyl-CoA: step 1/1. Component of the acetyl coenzyme A carboxylase (ACC) complex. Biotin carboxylase (BC) catalyzes the carboxylation of biotin on its carrier protein (BCCP) and then the CO(2) group is transferred by the transcarboxylase to acetyl-CoA to form malonyl-CoA. The polypeptide is Acetyl-coenzyme A carboxylase carboxyl transferase subunit beta, chloroplastic (Fagopyrum esculentum subsp. ancestrale (Wild buckwheat)).